Here is a 129-residue protein sequence, read N- to C-terminus: Small ribosomal subunit protein uS9 (129 aa).

The tract at residues 98-129 (KAQGFLTRDPRKKERKKYGRKKARKSFQFSKR) is disordered. Residues 110 to 129 (KERKKYGRKKARKSFQFSKR) show a composition bias toward basic residues.

Belongs to the universal ribosomal protein uS9 family.

In Chlamydia trachomatis serovar L2 (strain ATCC VR-902B / DSM 19102 / 434/Bu), this protein is Small ribosomal subunit protein uS9.